A 510-amino-acid polypeptide reads, in one-letter code: NAD(P)H-quinone oxidoreductase subunit 2 B, chloroplastic (510 aa).

Transmembrane regions (helical) follow at residues 24 to 44 (LLLFHGSFIFPECILIFGLIL), 59 to 79 (WFYFISSTSLVISITALLFRW), 99 to 119 (IFQFLILLCSTLCIPLSVEYI), 124 to 144 (MAITEFLLFVLTATLGGMFLC), 149 to 169 (LITIFVALECFSLCSYLLSGY), 184 to 204 (LLMGGASSSILVYGFSWLYGL), 229 to 249 (ISIALIFITVGLGFKLSLAPF), 261 to 281 (PTPVVAFLSVTSKVAALALAT), 295 to 315 (WHLLLEILAILSMILGNLLAI), 323 to 343 (MLAYSSIGQIGYVIIGIIVGD), 354 to 374 (YMLFYISMNLGTFACIVLFGL), 395 to 415 (ALSLALCLLSLGGLPPLAGFF), 418 to 438 (LYLFWCGWQAGLYFLVSIGLL), and 484 to 504 (MTVCVIASTILGISMNPILAI).

This sequence belongs to the complex I subunit 2 family. NDH is composed of at least 16 different subunits, 5 of which are encoded in the nucleus.

The protein localises to the plastid. It localises to the chloroplast thylakoid membrane. It catalyses the reaction a plastoquinone + NADH + (n+1) H(+)(in) = a plastoquinol + NAD(+) + n H(+)(out). It carries out the reaction a plastoquinone + NADPH + (n+1) H(+)(in) = a plastoquinol + NADP(+) + n H(+)(out). Its function is as follows. NDH shuttles electrons from NAD(P)H:plastoquinone, via FMN and iron-sulfur (Fe-S) centers, to quinones in the photosynthetic chain and possibly in a chloroplast respiratory chain. The immediate electron acceptor for the enzyme in this species is believed to be plastoquinone. Couples the redox reaction to proton translocation, and thus conserves the redox energy in a proton gradient. This is NAD(P)H-quinone oxidoreductase subunit 2 B, chloroplastic from Zea mays (Maize).